The primary structure comprises 460 residues: UDP-N-acetylmuramoylalanine--D-glutamate ligase (460 aa).

ATP is bound at residue 120–126; sequence GSNGKTT.

This sequence belongs to the MurCDEF family.

The protein resides in the cytoplasm. It carries out the reaction UDP-N-acetyl-alpha-D-muramoyl-L-alanine + D-glutamate + ATP = UDP-N-acetyl-alpha-D-muramoyl-L-alanyl-D-glutamate + ADP + phosphate + H(+). The protein operates within cell wall biogenesis; peptidoglycan biosynthesis. Its function is as follows. Cell wall formation. Catalyzes the addition of glutamate to the nucleotide precursor UDP-N-acetylmuramoyl-L-alanine (UMA). The sequence is that of UDP-N-acetylmuramoylalanine--D-glutamate ligase from Lactobacillus gasseri (strain ATCC 33323 / DSM 20243 / BCRC 14619 / CIP 102991 / JCM 1131 / KCTC 3163 / NCIMB 11718 / NCTC 13722 / AM63).